The primary structure comprises 503 residues: Cardiolipin synthase (503 aa).

The next 3 helical transmembrane spans lie at 5-25, 29-49, and 59-79; these read LNVL…RSFW, IVGA…IVIF, and LTWL…YLMF. PLD phosphodiesterase domains are found at residues 238-265 and 416-443; these read INYR…GDEY and TRGF…DMRS. Residues His243, Lys245, Asp250, His421, Lys423, and Asp428 contribute to the active site.

The protein belongs to the phospholipase D family. Cardiolipin synthase subfamily.

The protein localises to the cell membrane. The enzyme catalyses 2 a 1,2-diacyl-sn-glycero-3-phospho-(1'-sn-glycerol) = a cardiolipin + glycerol. In terms of biological role, catalyzes the reversible phosphatidyl group transfer from one phosphatidylglycerol molecule to another to form cardiolipin (CL) (diphosphatidylglycerol) and glycerol. This is Cardiolipin synthase (cls) from Halalkalibacterium halodurans (strain ATCC BAA-125 / DSM 18197 / FERM 7344 / JCM 9153 / C-125) (Bacillus halodurans).